The primary structure comprises 270 residues: Phosphatidylglycerol--prolipoprotein diacylglyceryl transferase (270 aa).

Transmembrane regions (helical) follow at residues 10–30, 56–76, 92–112, 120–140, 175–195, 202–222, and 237–257; these read VAVA…LVGI, LIFW…VLFY, WKGG…AWWF, FFQL…AGRI, SQLY…NLYA, MAVS…VEFV, and VTMG…LIWL. Arg-139 lines the a 1,2-diacyl-sn-glycero-3-phospho-(1'-sn-glycerol) pocket.

It belongs to the Lgt family.

The protein resides in the cell inner membrane. The enzyme catalyses L-cysteinyl-[prolipoprotein] + a 1,2-diacyl-sn-glycero-3-phospho-(1'-sn-glycerol) = an S-1,2-diacyl-sn-glyceryl-L-cysteinyl-[prolipoprotein] + sn-glycerol 1-phosphate + H(+). It participates in protein modification; lipoprotein biosynthesis (diacylglyceryl transfer). Functionally, catalyzes the transfer of the diacylglyceryl group from phosphatidylglycerol to the sulfhydryl group of the N-terminal cysteine of a prolipoprotein, the first step in the formation of mature lipoproteins. The sequence is that of Phosphatidylglycerol--prolipoprotein diacylglyceryl transferase from Pseudomonas savastanoi pv. phaseolicola (strain 1448A / Race 6) (Pseudomonas syringae pv. phaseolicola (strain 1448A / Race 6)).